Reading from the N-terminus, the 741-residue chain is MLKYEFLHGLQKRSHYLRQLSGQFFSRSYSSKIRNIGILAHIDAGKTTTTERMLFYAGKTRTLGEVHRGNTVTDYLTQERERGITICSSAVTFAWNGHRINLLDTPGHIDFTMEVEQSLYAVDGVVVVLDGTAGVEAQTVTVWTQADKHKLPRLIFVNKMDRPDADFEKCIADLKEKLEAHPVCLQYPVKNEDGVLAINDVITLERLTWQQKDLGQKYIRMKLEPSDELRDLQEKRNELIDRLSGVDDELADVVISTESFDKVDNHLIERALRRATGQLKVVPVLLGSAYKNVGIQRLMDAVNSYLPAPEERNQIYDCFGSEVAGKVFKIVHDKQRGALTLVRILRGEIKKGMRLISARGQAEVVSKLYEPLADEYREVNAVQSGDVVICAGLKSTVTGDLLTSSQSTLKNAQKRLKQSLGTTESVIPELDDESEESEDMFGLDPQIPDAVYFCSIEPPSISSQTAMEQALRQLQREDPSLRVSYDSVTGQTVLGGMGELHMDIIKSRILSEYKIDVDLGPLQIAYKETIESPALTTLSVEKEIAGAKQNVSITLELVKDKSEIFSLDKSPENMPNLNTLRPRILQVLKKGAIGALERGPRVGGQVVDTQIRLHNATIGRGTADSFVMATAAQCVQKVLSTSGTRLLEPIMSLQIVAPSERISGIMADLSRRRAQINDVLPKGERNKMILVNAPLAELSGYSSALRTISSGTASMTMQPCGFSAMNSVDESQAERRAQGLE.

The N-terminal 29 residues, 1 to 29, are a transit peptide targeting the mitochondrion; it reads MLKYEFLHGLQKRSHYLRQLSGQFFSRSY. Residues 31 to 310 form the tr-type G domain; that stretch reads SKIRNIGILA…AVNSYLPAPE (280 aa). Residues 40 to 47, 104 to 108, and 158 to 161 contribute to the GTP site; these read AHIDAGKT, DTPGH, and NKMD.

The protein belongs to the TRAFAC class translation factor GTPase superfamily. Classic translation factor GTPase family. EF-G/EF-2 subfamily.

Its subcellular location is the mitochondrion. In terms of biological role, mitochondrial GTPase that mediates the disassembly of ribosomes from messenger RNA at the termination of mitochondrial protein biosynthesis. Not involved in the GTP-dependent ribosomal translocation step during translation elongation. This is Ribosome-releasing factor 2, mitochondrial from Drosophila ananassae (Fruit fly).